Consider the following 392-residue polypeptide: tRNA (guanine-N(7)-)-methyltransferase (392 aa).

The S-adenosyl-L-methionine site is built by glutamate 123, glutamate 148, and aspartate 175. Substrate-binding residues include lysine 201 and aspartate 231.

It belongs to the class I-like SAM-binding methyltransferase superfamily. TrmB family.

It catalyses the reaction guanosine(46) in tRNA + S-adenosyl-L-methionine = N(7)-methylguanosine(46) in tRNA + S-adenosyl-L-homocysteine. Its pathway is tRNA modification; N(7)-methylguanine-tRNA biosynthesis. Functionally, catalyzes the formation of N(7)-methylguanine at position 46 (m7G46) in tRNA. The polypeptide is tRNA (guanine-N(7)-)-methyltransferase (Campylobacter jejuni subsp. jejuni serotype O:2 (strain ATCC 700819 / NCTC 11168)).